A 111-amino-acid polypeptide reads, in one-letter code: BET1-like protein (111 aa).

Residues 1–86 are Cytoplasmic-facing; the sequence is MADWTRAQSS…VARSGRDTRK (86 aa). Phosphoserine is present on residues Ser9 and Ser37. Residues 15–77 enclose the t-SNARE coiled-coil homology domain; the sequence is EIVDRENKRM…TGSVKRFSTV (63 aa). Residues 87-107 form a helical; Anchor for type IV membrane protein membrane-spanning segment; that stretch reads LLCGMAVVLIVAFFILSYLFS. The Vesicular segment spans residues 108–111; sequence RTRT.

Component of a SNARE complex consisting of STX5, YKT6, GOSR1 and BET1L. Interacts with STX5. Widely expressed. Highest levels in heart, liver, skeletal muscle and kidney.

Its subcellular location is the golgi apparatus membrane. It is found in the golgi apparatus. The protein localises to the trans-Golgi network membrane. In terms of biological role, vesicle SNARE required for targeting and fusion of retrograde transport vesicles with the Golgi complex. Required for the integrity of the Golgi complex. This Rattus norvegicus (Rat) protein is BET1-like protein.